A 410-amino-acid chain; its full sequence is Eukaryotic initiation factor 4A (410 aa).

The short motif at Glu37 to Gln65 is the Q motif element. The Helicase ATP-binding domain maps to Ile68–Ile238. Ala81–Thr88 is a binding site for ATP. Positions Asp186–Asp189 match the DEAD box motif. A Helicase C-terminal domain is found at Gly249–Leu410.

This sequence belongs to the DEAD box helicase family. eIF4A subfamily. As to quaternary structure, eIF4F is a multi-subunit complex, the composition of which varies with external and internal environmental conditions. It is composed of at least EIF4A, EIF4E and EIF4G.

The enzyme catalyses ATP + H2O = ADP + phosphate + H(+). In terms of biological role, ATP-dependent RNA helicase which is a subunit of the eIF4F complex involved in cap recognition and is required for mRNA binding to ribosome. In the current model of translation initiation, eIF4A unwinds RNA secondary structures in the 5'-UTR of mRNAs which is necessary to allow efficient binding of the small ribosomal subunit, and subsequent scanning for the initiator codon. The chain is Eukaryotic initiation factor 4A from Zea mays (Maize).